Here is a 433-residue protein sequence, read N- to C-terminus: MQSMNVQPRVLAVGGEQFFSQRQASEQHQQQNMGPQVYSPKVNRARMFPQGMPVNTINGSVNQEMNNAYLLKQKNEPLLTQQQQQQQQQQQPFNIGTPVSVASLPPGLNVLQQQQQQQQQQQQQQQGVGLNRPLASQLPKHLTNQSMPPIFLPPPNYLFVRDVWKSNLYSEFAVIRQLVSQYNHVSISTEFVGTLARPIGTFRSKVDYHYQTMRANVDFLNPIQLGLSLSDANGNKPDNGPSTWQFNFEFDPKKEIMSTESLELLRKSGINFEKHENLGIDVFEFSQLLMDSGLMMDDSVTWITYHAAYDLGFLINILMNDSMPNNKEDFEWWVHQYMPNFYDLNLVYKIIQEFKNPQLQQSSQQQQQQQYSLTTLADELGLPRFSIFTTTGGQSLLMLLSFCQLSKLSMHKFPNGTDFAKYQGVIYGIDGDQ.

N-acetylmethionine is present on Met-1. A disordered region spans residues 78–98 (LLTQQQQQQQQQQQPFNIGTP). Over residues 81-91 (QQQQQQQQQQQ) the composition is skewed to low complexity. Position 97 is a phosphothreonine; by YAK1 (Thr-97). Residues Ser-188, Glu-190, Asp-310, and Gln-394 each coordinate a divalent metal cation.

Belongs to the CAF1 family. In terms of assembly, subunit of the 1.0 MDa CCR4-NOT core complex that contains CCR4, CAF1, NOT1, NOT2, NOT3, NOT4, NOT5, CAF40 and CAF130. In the complex interacts with NOT1. The core complex probably is part of a less characterized 1.9 MDa CCR4-NOT complex. Mg(2+) is required as a cofactor.

Its subcellular location is the cytoplasm. It localises to the nucleus. It catalyses the reaction Exonucleolytic cleavage of poly(A) to 5'-AMP.. Its function is as follows. Acts as a probably catalytic component of the CCR4-NOT core complex, which in the nucleus seems to be a general transcription factor, and in the cytoplasm the major mRNA deadenylase involved in mRNA turnover. In vitro, POP2 has 3'-exoribonuclease activity with a preference for poly(A) RNAs, but also degrades poly(U) and poly(C) RNAs. Is part of a glucose-sensing system involved in growth control in response to glucose availability. This Saccharomyces cerevisiae (strain ATCC 204508 / S288c) (Baker's yeast) protein is Poly(A) ribonuclease POP2 (POP2).